Here is a 476-residue protein sequence, read N- to C-terminus: MTRFLFALILGFLLTACQQVTVDETEFVPKKLTELRVGTLYGPQIYMTSGQGDSGFDYDMAVLFAEYLDVPLKMVPYTNRTELYEALKKNEIDLIAAGMTETPARREQFRLGPPLYRVNQVLVYREGMPAPKDISDLKGKITVIADSSFVETLTQLQKHYPTLVWDQITDKDSEELLAMIANKEIDYTIADSSSVQINRRYLPDLRSGPVLEEKLDVVWLLPPTRSDELMSQLLAFWHQEKLAGTLDHLNEKYFGHVKRFDYVDTRAFIRAIETVLPRYRQLFETHAGNLDWRKLAATSYQESHWNPHARSATGVRGMMMLTQPTAKEIGITNRLDAEESIRGGAAYLNDMINRLPESIPESQRMWFALASYNIGYAHVEDARKLAESMELNPNAWRDLKKVLPLLQKRKYYQKTRYGYARGSEAVHYVDSIRRYYDTLVWVDNQSKQQNPEEEPSDLASEEPAIPAGTLSPEQPK.

Residues 1–22 form the signal peptide; it reads MTRFLFALILGFLLTACQQVTV. A non-LT domain region spans residues 23–257; sequence DETEFVPKKL…HLNEKYFGHV (235 aa). The tract at residues 258–476 is LT domain; sequence KRFDYVDTRA…AGTLSPEQPK (219 aa). Residue Glu302 is part of the active site. The interval 446-476 is disordered; it reads SKQQNPEEEPSDLASEEPAIPAGTLSPEQPK. The segment covering 451–460 has biased composition (acidic residues); the sequence is PEEEPSDLAS.

In the N-terminal section; belongs to the bacterial solute-binding protein 3 family. The protein in the C-terminal section; belongs to the transglycosylase Slt family.

The protein localises to the cell outer membrane. The catalysed reaction is Exolytic cleavage of the (1-&gt;4)-beta-glycosidic linkage between N-acetylmuramic acid (MurNAc) and N-acetylglucosamine (GlcNAc) residues in peptidoglycan, from either the reducing or the non-reducing ends of the peptidoglycan chains, with concomitant formation of a 1,6-anhydrobond in the MurNAc residue.. Functionally, murein-degrading enzyme that degrades murein glycan strands and insoluble, high-molecular weight murein sacculi, with the concomitant formation of a 1,6-anhydromuramoyl product. Lytic transglycosylases (LTs) play an integral role in the metabolism of the peptidoglycan (PG) sacculus. Their lytic action creates space within the PG sacculus to allow for its expansion as well as for the insertion of various structures such as secretion systems and flagella. The chain is Membrane-bound lytic murein transglycosylase F from Shewanella baltica (strain OS155 / ATCC BAA-1091).